The sequence spans 295 residues: uncharacterized protein (295 aa).

NAD(+)-binding positions include 11 to 25 (GYIG…MAKR) and T101. K176 is an active-site residue. K252 lines the NAD(+) pocket.

This sequence belongs to the HIBADH-related family.

This is an uncharacterized protein from Mycobacterium tuberculosis (strain CDC 1551 / Oshkosh).